Here is a 375-residue protein sequence, read N- to C-terminus: Lipid-A-disaccharide synthase (375 aa).

It belongs to the LpxB family.

The enzyme catalyses a lipid X + a UDP-2-N,3-O-bis[(3R)-3-hydroxyacyl]-alpha-D-glucosamine = a lipid A disaccharide + UDP + H(+). The protein operates within bacterial outer membrane biogenesis; LPS lipid A biosynthesis. In terms of biological role, condensation of UDP-2,3-diacylglucosamine and 2,3-diacylglucosamine-1-phosphate to form lipid A disaccharide, a precursor of lipid A, a phosphorylated glycolipid that anchors the lipopolysaccharide to the outer membrane of the cell. This is Lipid-A-disaccharide synthase from Pseudomonas putida (strain ATCC 700007 / DSM 6899 / JCM 31910 / BCRC 17059 / LMG 24140 / F1).